The primary structure comprises 562 residues: Exonuclease subunit 2 (562 aa).

An ATP-binding site is contributed by 36–43; sequence GKNGGGKS.

This sequence to phage T5 protein D13 and to yeast RAD52. As to quaternary structure, consists of two subunits: Gp47 and Gp46.

Its function is as follows. Exonuclease involved in phage DNA recombination, replication, and repair. The chain is Exonuclease subunit 2 (46) from Escherichia phage RB69 (Bacteriophage RB69).